The following is a 1089-amino-acid chain: Protein phosphatase 1 regulatory subunit 3A (1089 aa).

The disordered stretch occupies residues 32–57 (KATFKPGFSPQPSRRGSGSSEDMYLD). The segment covering 37 to 51 (PGFSPQPSRRGSGSS) has biased composition (low complexity). 2 positions are modified to phosphoserine; by GSK3: Ser-40 and Ser-44. A phosphoserine mark is found at Ser-48 and Ser-51. At Thr-58 the chain carries Phosphothreonine. A PP1-binding motif motif is present at residues 64–67 (RRVS). Ser-67 is subject to Phosphoserine; by PKA. Positions 123-231 (EQLQVQKAVL…NNNGTNYILV (109 aa)) constitute a CBM21 domain. Disordered stretches follow at residues 385–420 (FYHSRSSSPGNEYGHPHSEEIISDMGEKGPSLGDTS), 479–501 (HGDSTKLEESNASSRDDYAKVDN), and 566–649 (PCPS…SDIA). A compositionally biased stretch (polar residues) spans 581–600 (SGSNLEPGTSDLSSPRNFSP). Basic and acidic residues predominate over residues 602–614 (TDDHLFQADRENS). Residues 615–625 (DSSNPENQNMN) are compositionally biased toward polar residues. Ser-821 is modified (phosphoserine). Positions 949–968 (IMKSGSGGERGGGPILQQKE) are disordered. A compositionally biased stretch (gly residues) spans 953–962 (GSGGERGGGP). The helical transmembrane segment at 1047–1067 (LLFLIFLATVYYYDLMIGLAF) threads the bilayer.

In terms of assembly, interacts with PPP1CC catalytic subunit of PP1, and associates with glycogen. Phosphorylation at Ser-48 by ISPK stimulates the dephosphorylation of glycogen synthase and phosphorylase kinase. Skeletal muscle and heart.

Its subcellular location is the membrane. Its function is as follows. Seems to act as a glycogen-targeting subunit for PP1. PP1 is essential for cell division, and participates in the regulation of glycogen metabolism, muscle contractility and protein synthesis. Plays an important role in glycogen synthesis but is not essential for insulin activation of glycogen synthase. This chain is Protein phosphatase 1 regulatory subunit 3A (Ppp1r3a), found in Mus musculus (Mouse).